Reading from the N-terminus, the 207-residue chain is MSERLLVLVRHGQSEWNLKNLFTGWKDPDLTELGVTEAKDAGRKLKEQGFAFDIAFTSVLIRAEHTLDLVLEELGQTGIPVRKDLALNERDYGDLAGLNKDEARKKWGEEQVLIWRRSYDVPPPGGESLKDTLARTLPYFVQEILPCVLRGECTLVAAHGNSLRALVMVLEKLSPEQILKRELATGAPVIYRLNADATVASKLDLAA.

Substrate-binding positions include 10–17 (RHGQSEWN), 23–24 (TG), Arg-62, 89–92 (ERDY), Lys-100, 116–117 (RR), and 160–161 (GN). The active-site Tele-phosphohistidine intermediate is the His-11. Catalysis depends on Glu-89, which acts as the Proton donor/acceptor.

The protein belongs to the phosphoglycerate mutase family. BPG-dependent PGAM subfamily. Homodimer.

The enzyme catalyses (2R)-2-phosphoglycerate = (2R)-3-phosphoglycerate. Its pathway is carbohydrate degradation; glycolysis; pyruvate from D-glyceraldehyde 3-phosphate: step 3/5. Functionally, catalyzes the interconversion of 2-phosphoglycerate and 3-phosphoglycerate. The polypeptide is 2,3-bisphosphoglycerate-dependent phosphoglycerate mutase (Nitrobacter hamburgensis (strain DSM 10229 / NCIMB 13809 / X14)).